Reading from the N-terminus, the 72-residue chain is Translational regulator CsrA (72 aa).

The protein belongs to the CsrA/RsmA family. Homodimer; the beta-strands of each monomer intercalate to form a hydrophobic core, while the alpha-helices form wings that extend away from the core.

The protein localises to the cytoplasm. In terms of biological role, a translational regulator that binds mRNA to regulate translation initiation and/or mRNA stability. Usually binds in the 5'-UTR at or near the Shine-Dalgarno sequence preventing ribosome-binding, thus repressing translation. Its main target seems to be the major flagellin gene, while its function is anatagonized by FliW. This Agathobacter rectalis (strain ATCC 33656 / DSM 3377 / JCM 17463 / KCTC 5835 / VPI 0990) (Eubacterium rectale) protein is Translational regulator CsrA.